The chain runs to 739 residues: Pre-mRNA-splicing factor ATP-dependent RNA helicase ddx-15 (739 aa).

Residues 1–19 (MSSRHRLDLDGSGRGDRRR) are compositionally biased toward basic and acidic residues. The disordered stretch occupies residues 1 to 49 (MSSRHRLDLDGSGRGDRRRSPNRRSRSRSRSPHRRSSPDRKRQIGAVGN). Residues 20-35 (SPNRRSRSRSRSPHRR) show a composition bias toward basic residues. The Helicase ATP-binding domain occupies 86 to 257 (MELLRNNQCI…FEDCPLLSVP (172 aa)). 99–106 (GETGSGKT) is a binding site for ATP. Residues 204 to 207 (DEAH) carry the DEAH box motif. The region spanning 282-462 (TVIQIHMVEE…SVVLQLKKLG (181 aa)) is the Helicase C-terminal domain.

Belongs to the DEAD box helicase family. DEAH subfamily. DDX15/PRP43 sub-subfamily.

It localises to the nucleus. It catalyses the reaction ATP + H2O = ADP + phosphate + H(+). Pre-mRNA processing factor involved in disassembly of spliceosomes after the release of mature mRNA. This is Pre-mRNA-splicing factor ATP-dependent RNA helicase ddx-15 from Caenorhabditis elegans.